The following is a 178-amino-acid chain: MMAQQEKVVYPRYAVIRLRGIPTTPRDIAVTLDLLRLRRKFTMVVVKGSPSVMGMIQKVNDWVTWGEIDADTLAEVLRKRGRIVGDKPLTLEYLQKWGWHSFEEIALAYVAGEIDSLSCGKKMRIKEGERPPCIPYLKPFFRLHPPRGGLNSVKLHFSVGGDLGYRGPLINDLIRRML.

This sequence belongs to the universal ribosomal protein uL30 family. Part of the 50S ribosomal subunit.

This Pyrobaculum aerophilum (strain ATCC 51768 / DSM 7523 / JCM 9630 / CIP 104966 / NBRC 100827 / IM2) protein is Large ribosomal subunit protein uL30.